The sequence spans 147 residues: Small ribosomal subunit protein uS12 (147 aa).

This sequence belongs to the universal ribosomal protein uS12 family. In terms of assembly, part of the 30S ribosomal subunit.

Its function is as follows. With S4 and S5 plays an important role in translational accuracy. Located at the interface of the 30S and 50S subunits. This chain is Small ribosomal subunit protein uS12, found in Pyrococcus horikoshii (strain ATCC 700860 / DSM 12428 / JCM 9974 / NBRC 100139 / OT-3).